Reading from the N-terminus, the 130-residue chain is Snaclec B8 (130 aa).

3 cysteine pairs are disulfide-bonded: Cys-2–Cys-13, Cys-30–Cys-124, and Cys-99–Cys-116. A C-type lectin domain is found at 9–125; that stretch reads HEGHCYKVFK…CELAYHFICM (117 aa).

Belongs to the snaclec family. Heterodimer; disulfide-linked. Expressed by the venom gland.

It is found in the secreted. Functionally, interferes with one step of hemostasis (modulation of platelet aggregation, or coagulation cascade, for example). This chain is Snaclec B8, found in Macrovipera lebetinus (Levantine viper).